The sequence spans 638 residues: RAF proto-oncogene serine/threonine-protein kinase (638 aa).

S43 is modified (phosphoserine). The region spanning 56-130 is the RBD domain; the sequence is STMRVYLPNK…VGAELQVDFL (75 aa). The Phorbol-ester/DAG-type zinc-finger motif lies at 137 to 183; sequence THNFVRKTFLKLAFCDICQKFLLNAFRCQTCGYKFHEHCSTKVPTMC. The Zn(2+) site is built by H138, C151, C154, C164, C167, H172, C175, and C183. Phosphoserine is present on S257. The residue at position 266 (T266) is a Phosphothreonine; by autocatalysis. Residues 279–323 are disordered; it reads LRSHSESGSPNNLSPTGWSNAKAPAPTHREKAASSTGQEKNKIRA. Residues 284-297 are compositionally biased toward polar residues; it reads ESGSPNNLSPTGWS. Position 329 is a phosphoserine (S329). Positions 340–600 constitute a Protein kinase domain; the sequence is VMLSSRIGSG…PQILSSIELL (261 aa). Residues 346–354 and K366 each bind ATP; that span reads IGSGSFGTV. Catalysis depends on D459, which acts as the Proton acceptor. Residue S490 is modified to Phosphoserine.

Belongs to the protein kinase superfamily. TKL Ser/Thr protein kinase family. RAF subfamily. Zn(2+) is required as a cofactor. In terms of processing, phosphorylation at Ser-257 inactivates kinase activity. Dephosphorylation of Ser-257 by a complex containing protein phosphatase 1 relieves inactivation, leading to stimulate RAF1 activity.

It localises to the cytoplasm. Its subcellular location is the cell membrane. The catalysed reaction is L-seryl-[protein] + ATP = O-phospho-L-seryl-[protein] + ADP + H(+). The enzyme catalyses L-threonyl-[protein] + ATP = O-phospho-L-threonyl-[protein] + ADP + H(+). Functionally, serine/threonine-protein kinase that acts as a regulatory link between the membrane-associated Ras GTPases and the MAPK/ERK cascade, and this critical regulatory link functions as a switch determining cell fate decisions. RAF1 activation initiates a mitogen-activated protein kinase (MAPK) cascade that comprises a sequential phosphorylation of the dual-specific MAPK kinases (MAP2K1/MEK1 and MAP2K2/MEK2) and the extracellular signal-regulated kinases (MAPK3/ERK1 and MAPK1/ERK2). The polypeptide is RAF proto-oncogene serine/threonine-protein kinase (raf1) (Xenopus laevis (African clawed frog)).